A 282-amino-acid polypeptide reads, in one-letter code: Virginiamycin B lyase (282 aa).

Residue His-217 coordinates substrate. Glu-256 is a binding site for Mg(2+). The active-site Proton acceptor is His-258. Glu-273 serves as a coordination point for Mg(2+).

The protein belongs to the Vgb family. Monomer. Mg(2+) serves as cofactor.

Its function is as follows. Inactivates the type B streptogramin antibiotics by linearizing the lactone ring at the ester linkage, generating a free phenylglycine carboxylate and converting the threonyl moiety into 2-amino-butenoic acid. The sequence is that of Virginiamycin B lyase from Mycolicibacterium smegmatis (strain ATCC 700084 / mc(2)155) (Mycobacterium smegmatis).